A 130-amino-acid polypeptide reads, in one-letter code: UPF0102 protein BT_1882 (130 aa).

This sequence belongs to the UPF0102 family.

This is UPF0102 protein BT_1882 from Bartonella tribocorum (strain CIP 105476 / IBS 506).